The primary structure comprises 193 residues: uncharacterized protein (193 aa).

4 helical membrane passes run 8-28, 46-66, 82-102, and 141-161; these read GVLV…VVAI, FFIA…VASA, GLSI…ALVV, and IALT…LLAA.

This sequence to M.leprae ML1222.

The protein resides in the cell membrane. This is an uncharacterized protein from Mycobacterium tuberculosis (strain CDC 1551 / Oshkosh).